Reading from the N-terminus, the 298-residue chain is Quinolinate synthase (298 aa).

2 residues coordinate iminosuccinate: H19 and S36. C81 serves as a coordination point for [4Fe-4S] cluster. Iminosuccinate-binding positions include Y107–N109 and S124. C168 contacts [4Fe-4S] cluster. Residues H193–E195 and T210 contribute to the iminosuccinate site. A [4Fe-4S] cluster-binding site is contributed by C254.

This sequence belongs to the quinolinate synthase family. Type 2 subfamily. It depends on [4Fe-4S] cluster as a cofactor.

The protein resides in the cytoplasm. It catalyses the reaction iminosuccinate + dihydroxyacetone phosphate = quinolinate + phosphate + 2 H2O + H(+). The protein operates within cofactor biosynthesis; NAD(+) biosynthesis; quinolinate from iminoaspartate: step 1/1. Catalyzes the condensation of iminoaspartate with dihydroxyacetone phosphate to form quinolinate. The protein is Quinolinate synthase of Thermotoga petrophila (strain ATCC BAA-488 / DSM 13995 / JCM 10881 / RKU-1).